The following is a 373-amino-acid chain: D-alanine--D-alanine ligase (373 aa).

An ATP-grasp domain is found at 156–363 (KKLLAADGLP…YPTLLATMIE (208 aa)). 184-239 (CERLGLPVFVKPARGGSSIGVSRVSSWDQLPAAVARARRHDPKVIVEAAISGRELE) serves as a coordination point for ATP. Residues D318, E330, and N332 each contribute to the Mg(2+) site.

It belongs to the D-alanine--D-alanine ligase family. It depends on Mg(2+) as a cofactor. Mn(2+) serves as cofactor.

The protein localises to the cytoplasm. It catalyses the reaction 2 D-alanine + ATP = D-alanyl-D-alanine + ADP + phosphate + H(+). It functions in the pathway cell wall biogenesis; peptidoglycan biosynthesis. Its function is as follows. Cell wall formation. The polypeptide is D-alanine--D-alanine ligase (Mycobacterium bovis (strain BCG / Pasteur 1173P2)).